The following is a 312-amino-acid chain: Ribosomal RNA small subunit methyltransferase H (312 aa).

Residues 36–38 (GGH), Asp-55, Phe-81, Asp-103, and Gln-110 contribute to the S-adenosyl-L-methionine site.

It belongs to the methyltransferase superfamily. RsmH family.

Its subcellular location is the cytoplasm. The enzyme catalyses cytidine(1402) in 16S rRNA + S-adenosyl-L-methionine = N(4)-methylcytidine(1402) in 16S rRNA + S-adenosyl-L-homocysteine + H(+). Its function is as follows. Specifically methylates the N4 position of cytidine in position 1402 (C1402) of 16S rRNA. The polypeptide is Ribosomal RNA small subunit methyltransferase H (Marinomonas sp. (strain MWYL1)).